The following is a 323-amino-acid chain: UPF0065 protein BP0148 (323 aa).

The N-terminal stretch at 1 to 24 (MKPFSLLRRIATIALLMAASSAHA) is a signal peptide.

Belongs to the UPF0065 (bug) family.

It is found in the periplasm. The polypeptide is UPF0065 protein BP0148 (Bordetella pertussis (strain Tohama I / ATCC BAA-589 / NCTC 13251)).